The sequence spans 303 residues: Olfactory receptor 10A2 (303 aa).

Topologically, residues 1–12 are extracellular; sequence MSFSSLPTEIQS. The chain crosses the membrane as a helical span at residues 13–33; it reads LLFLTFLTIYLVTLMGNCLII. Residues 34-41 are Cytoplasmic-facing; that stretch reads LVTLADPM. The chain crosses the membrane as a helical span at residues 42 to 62; sequence LHSPMYFFLRNLSFLEIGFNL. Over 63-86 the chain is Extracellular; the sequence is VIVPKMLGTLLAQDTTISFLGCAT. Residues C84 and C176 are joined by a disulfide bond. A helical transmembrane segment spans residues 87 to 107; sequence QMYFFFFFGVAECFLLATMAY. At 108-126 the chain is on the cytoplasmic side; that stretch reads DRYVAICSPLHYPVIMNQR. Residues 127-147 form a helical membrane-spanning segment; sequence TRAKLAAASWFPGFPVATVQT. Residues 148–184 lie on the Extracellular side of the membrane; sequence TWLFSFPFCGTNKVNHFFCDSPPVLRLVCADTALFEI. A helical transmembrane segment spans residues 185-204; it reads YAIVGTILVVMIPCLLILCS. The Cytoplasmic portion of the chain corresponds to 205-224; that stretch reads YTHIAAAILKIPSAKGKNKA. Residues 225–245 traverse the membrane as a helical segment; the sequence is FSTCSSHLLVVSLFYISLSLT. The Extracellular portion of the chain corresponds to 246–258; it reads YFRPKSNNSPEGK. Residues 259-279 traverse the membrane as a helical segment; sequence KLLSLSYTVMTPMLNPIIYSL. Over 280-301 the chain is Cytoplasmic; that stretch reads RNNEVKNALSRTVSKALALRNC.

Belongs to the G-protein coupled receptor 1 family.

It is found in the cell membrane. In terms of biological role, odorant receptor. The protein is Olfactory receptor 10A2 (OR10A2) of Homo sapiens (Human).